Here is a 310-residue protein sequence, read N- to C-terminus: Homoserine kinase (310 aa).

91–101 (PIGSGLGSSAC) serves as a coordination point for ATP.

It belongs to the GHMP kinase family. Homoserine kinase subfamily.

The protein resides in the cytoplasm. The enzyme catalyses L-homoserine + ATP = O-phospho-L-homoserine + ADP + H(+). The protein operates within amino-acid biosynthesis; L-threonine biosynthesis; L-threonine from L-aspartate: step 4/5. Its function is as follows. Catalyzes the ATP-dependent phosphorylation of L-homoserine to L-homoserine phosphate. The sequence is that of Homoserine kinase from Shigella flexneri serotype 5b (strain 8401).